The primary structure comprises 171 residues: Small ribosomal subunit protein uS4 (171 aa).

An S4 RNA-binding domain is found at 101 to 165; the sequence is RRLQTVVYRK…SSLSDELHPE (65 aa). The interval 148–171 is disordered; that stretch reads SSVGFDEHSSLSDELHPERAEAQE. The segment covering 152–171 has biased composition (basic and acidic residues); sequence FDEHSSLSDELHPERAEAQE.

It belongs to the universal ribosomal protein uS4 family. Part of the 30S ribosomal subunit. Contacts protein S5. The interaction surface between S4 and S5 is involved in control of translational fidelity.

Functionally, one of the primary rRNA binding proteins, it binds directly to 16S rRNA where it nucleates assembly of the body of the 30S subunit. With S5 and S12 plays an important role in translational accuracy. The polypeptide is Small ribosomal subunit protein uS4 (Haloarcula marismortui (strain ATCC 43049 / DSM 3752 / JCM 8966 / VKM B-1809) (Halobacterium marismortui)).